Consider the following 270-residue polypeptide: NADPH-dependent 7-cyano-7-deazaguanine reductase (270 aa).

79 to 81 (IES) provides a ligand contact to substrate. Residue 81–82 (SK) coordinates NADPH. The active-site Thioimide intermediate is cysteine 177. Aspartate 184 acts as the Proton donor in catalysis. 216–217 (HE) lines the substrate pocket. 245–246 (RG) lines the NADPH pocket.

The protein belongs to the GTP cyclohydrolase I family. QueF type 2 subfamily. In terms of assembly, homodimer.

Its subcellular location is the cytoplasm. It catalyses the reaction 7-aminomethyl-7-carbaguanine + 2 NADP(+) = 7-cyano-7-deazaguanine + 2 NADPH + 3 H(+). The protein operates within tRNA modification; tRNA-queuosine biosynthesis. Functionally, catalyzes the NADPH-dependent reduction of 7-cyano-7-deazaguanine (preQ0) to 7-aminomethyl-7-deazaguanine (preQ1). In Acinetobacter baumannii (strain SDF), this protein is NADPH-dependent 7-cyano-7-deazaguanine reductase.